An 81-amino-acid chain; its full sequence is MATSKSGGSSKNGRDSISKRLGVKRSGGQFVKAGEIIVRQRGTKFHKGKNVGLGRDYTIFALSSGKVEFKTLKGRKYVSIV.

Positions 1–11 (MATSKSGGSSK) are enriched in polar residues. The disordered stretch occupies residues 1–20 (MATSKSGGSSKNGRDSISKR).

Belongs to the bacterial ribosomal protein bL27 family.

The polypeptide is Large ribosomal subunit protein bL27 (Borreliella afzelii (strain PKo) (Borrelia afzelii)).